The chain runs to 484 residues: MPGTPVSDLSAAAAVDAPALLPLPVARPSAPAVVRGKLYIKTHGCQMNEYDSAKMADVLAASEGLELTDNPEEADVVLVNTCSIREKAQEKVFSQLGRWKALKAGGKPVIIGVGGCVASQEGEAIVKRAPYVDLVFGPQTLHRLPELIRARRESGKSQVDISFPEIEKFDRLPEPRAEGPSAFVSIMEGCSKYCSFCVVPYTRGEEVSRPFEDVLVEVAQLAAQGVREINLLGQNVNAYRGAYGADAGDAAQYADLGLLIRTIAQIEGIGRIRFTTSHPLEFSDSLVDAYRDVPQLANYLHLPVQAGSDRILSAMKRGYTALEFKSKIRKLRAVRPDISISSDFIVGFPGETEADFEKTMKLIEDVGFDQSFSFVYSRRPGTPASDLQDDTPEAVKQARLARLQAHINAHAASISQSMVGSVQRVLVEGPSRRDPNELTGKSENMRPVNFPGNPRLIGQFVDVLITEAMSNSLRGRIQLDDSAQ.

Residues 36–153 (GKLYIKTHGC…LPELIRARRE (118 aa)) form the MTTase N-terminal domain. Residues C45, C82, C116, C190, C194, and C197 each coordinate [4Fe-4S] cluster. The Radical SAM core domain maps to 176–415 (RAEGPSAFVS…HINAHAASIS (240 aa)). The region spanning 416–479 (QSMVGSVQRV…SNSLRGRIQL (64 aa)) is the TRAM domain. Residues 428–450 (EGPSRRDPNELTGKSENMRPVNF) form a disordered region.

This sequence belongs to the methylthiotransferase family. MiaB subfamily. In terms of assembly, monomer. [4Fe-4S] cluster serves as cofactor.

The protein localises to the cytoplasm. It catalyses the reaction N(6)-dimethylallyladenosine(37) in tRNA + (sulfur carrier)-SH + AH2 + 2 S-adenosyl-L-methionine = 2-methylsulfanyl-N(6)-dimethylallyladenosine(37) in tRNA + (sulfur carrier)-H + 5'-deoxyadenosine + L-methionine + A + S-adenosyl-L-homocysteine + 2 H(+). Functionally, catalyzes the methylthiolation of N6-(dimethylallyl)adenosine (i(6)A), leading to the formation of 2-methylthio-N6-(dimethylallyl)adenosine (ms(2)i(6)A) at position 37 in tRNAs that read codons beginning with uridine. This chain is tRNA-2-methylthio-N(6)-dimethylallyladenosine synthase, found in Xanthomonas euvesicatoria pv. vesicatoria (strain 85-10) (Xanthomonas campestris pv. vesicatoria).